The following is a 144-amino-acid chain: MVSFLGGGLLGNPLSGALEEKEDKKEGDEEEDPEIAEAKREAEEKRNEKYRKMEEEREVMRQGIRDKYHIQKKELPKEDPGLEGRLGRKKKSPDEAVEGGDPLQSSAQSSGFPKNLDDLTAKVKELPGTVMTTVSGATDKCNLQ.

A compositionally biased stretch (gly residues) spans 1 to 10 (MVSFLGGGLL). Residues 1 to 119 (MVSFLGGGLL…SGFPKNLDDL (119 aa)) form a disordered region. Basic and acidic residues-rich tracts occupy residues 18-27 (LEEKEDKKEG) and 36-86 (AEAK…EGRL). Residues 29 to 67 (EEEDPEIAEAKREAEEKRNEKYRKMEEEREVMRQGIRDK) are a coiled coil. Residues 103-112 (LQSSAQSSGF) are compositionally biased toward polar residues. Cysteine methyl ester is present on Cys141. Cys141 carries S-farnesyl cysteine lipidation. The propeptide at 142–144 (NLQ) is removed in mature form.

Belongs to the complexin/synaphin family. Binds to the SNARE core complex containing SNAP25, synaptobrevin and syntaxin-1. As to expression, expressed in a subset of neurons in the central nervous system, including large serotoninergic Retzius neurons and pressure-sensitive P cells.

It localises to the membrane. Positively regulates a late step in synaptic vesicle exocytosis. The polypeptide is Complexin-1 (cpx1) (Hirudo medicinalis (Medicinal leech)).